We begin with the raw amino-acid sequence, 264 residues long: 3-methyl-2-oxobutanoate hydroxymethyltransferase (264 aa).

Mg(2+) is bound by residues Asp-45 and Asp-84. Residues Asp-45–Ser-46, Asp-84, and Lys-112 contribute to the 3-methyl-2-oxobutanoate site. Glu-114 provides a ligand contact to Mg(2+). Glu-181 serves as the catalytic Proton acceptor.

The protein belongs to the PanB family. In terms of assembly, homodecamer; pentamer of dimers. The cofactor is Mg(2+).

The protein localises to the cytoplasm. It catalyses the reaction 3-methyl-2-oxobutanoate + (6R)-5,10-methylene-5,6,7,8-tetrahydrofolate + H2O = 2-dehydropantoate + (6S)-5,6,7,8-tetrahydrofolate. It participates in cofactor biosynthesis; (R)-pantothenate biosynthesis; (R)-pantoate from 3-methyl-2-oxobutanoate: step 1/2. Catalyzes the reversible reaction in which hydroxymethyl group from 5,10-methylenetetrahydrofolate is transferred onto alpha-ketoisovalerate to form ketopantoate. The protein is 3-methyl-2-oxobutanoate hydroxymethyltransferase of Shewanella sediminis (strain HAW-EB3).